The primary structure comprises 316 residues: Taste receptor type 2 member 3 (316 aa).

At 1 to 7 the chain is on the extracellular side; that stretch reads MLGFTEG. Residues 8–28 form a helical membrane-spanning segment; the sequence is IFLVLTVTEFILGNLVNGFIV. Over 29-50 the chain is Cytoplasmic; it reads SVNGSHWFKSKKISLSDFIITS. Residues 51 to 71 form a helical membrane-spanning segment; sequence LALFRIFLLWIIFTDSLIIVF. Over 72 to 86 the chain is Extracellular; the sequence is SYHTHDSGIRMQLID. Residues 87-107 form a helical membrane-spanning segment; that stretch reads VFWTFTNHFSIWLISCLSVFY. Residues 108-128 lie on the Cytoplasmic side of the membrane; sequence CLKIATFSHPSFLWLKWRASR. Residues 129 to 149 form a helical membrane-spanning segment; that stretch reads VVVGMLWGALVLSCVCTMSLM. Residues 150–186 are Extracellular-facing; that stretch reads NEFKIYSALTGSRDTQNMTEYIRLKRHEYNLMHVLGN. Asn166 is a glycosylation site (N-linked (GlcNAc...) asparagine). Residues 187 to 207 form a helical membrane-spanning segment; the sequence is LWKIPSLIVSLIAYFLLLLSL. Residues 208-234 lie on the Cytoplasmic side of the membrane; sequence GKHTQQMQKYSVGSRDQSAEAHRRAMR. Residues 235–255 traverse the membrane as a helical segment; that stretch reads IILSFLLFFLFYFLSFVILSS. At 256–266 the chain is on the extracellular side; the sequence is SRFLPETKIAR. Residues 267 to 287 traverse the membrane as a helical segment; the sequence is IIGVVITMSYLVGDSLILILG. At 288–316 the chain is on the cytoplasmic side; it reads NNKLKQTFVAILPCECGHPKPGSKRFFAS.

The protein belongs to the G-protein coupled receptor T2R family.

The protein resides in the membrane. Gustducin-coupled receptor implicated in the perception of bitter compounds in the oral cavity and the gastrointestinal tract. Signals through PLCB2 and the calcium-regulated cation channel TRPM5. This Rattus norvegicus (Rat) protein is Taste receptor type 2 member 3.